The chain runs to 142 residues: Dromaiocalcin-1 (142 aa).

3 disulfide bridges follow: Cys-13-Cys-24, Cys-41-Cys-138, and Cys-113-Cys-130. The region spanning 20–139 (FRGNCYGYFR…CGERNAFICK (120 aa)) is the C-type lectin domain.

It localises to the secreted. Its subcellular location is the extracellular space. The protein resides in the extracellular matrix. The protein is Dromaiocalcin-1 of Dromaius novaehollandiae (Emu).